The sequence spans 378 residues: Tyrosinase-like protein phomQ1' (378 aa).

The chain crosses the membrane as a helical span at residues 42 to 62 (TIIVVSVITFAAIIGCWVFLS). Residues His-130 and His-139 each coordinate Cu cation. N-linked (GlcNAc...) asparagine glycosylation is present at Asn-209. Cu cation contacts are provided by His-279 and His-305.

Belongs to the tyrosinase family. Cu(2+) serves as cofactor.

It localises to the membrane. Its pathway is mycotoxin biosynthesis. Its function is as follows. Tyrosinase-like protein; part of the gene cluster that mediates the biosynthesis of the phomopsins, a group of hexapeptide mycotoxins which infects lupins and causes lupinosis disease in livestock. The pathway starts with the processing of the precursor phomA' by several endopeptidases including kexin proteases as well as the cluster-specific S41 family peptidase phomP1 and the oligopeptidase phomG' to produce 10 identical copies of the hexapeptide Tyr-Val-Ile-Pro-Ile-Asp. After being excised from the precursor peptide, the core peptides are cyclized and modified post-translationally by enzymes encoded within the gene cluster. The timing and order of proteolysis of the phomA' precursor and PTMs are still unknown. Two tyrosinase-like enzymes, phomQ1' and phomQ2, catalyze the chlorination and hydroxylation of Tyr, respectively. PhomYb, is proposed to be involved in the construction of the macrocyclic structure. The other 4 ustYa family proteins may be involved in PTMs that generate the unique structure of phomopsin A. PhomYa' is required for the hydroxylation of C-beta of Tyr. PhomYc', phomYd', and phomYe are responsible for the biosynthesis of 2,3-dehydroisoleucine (dIle), 2,3-dehydroaspartic acid (dAsp), and 3,4-dehydroproline (dPro), respectively. While dIle formation by phomYc' is indispensable for the installation of dAsp by phomYd', the order of the other PTMs have not been elucidated yet. Most of the biosynthetic enzymes likely have broad substrate specificity, and thus, there might be a metabolic grid from a precursor to phomopsin A. The enzyme(s) responsible for the biosynthesis of 3,4-dehydrovaline (dVal) have also not been identified yet. Finally, phomM' acts as an S-adenosylmethionine-dependent alpha-N-methyltransferase that catalyzes two successive N-methylation reactions, converting N-desmethyl-phomopsin A to phomopsin A and phomopsin A further to an N,N-dimethylated congener called phomopsin E. The sequence is that of Tyrosinase-like protein phomQ1' from Diaporthe leptostromiformis (Lupinosis disease fungus).